The following is a 527-amino-acid chain: NADH-ubiquinone oxidoreductase chain 5 (527 aa).

14 helical membrane-spanning segments follow: residues I3–P23, F43–V63, F75–S95, I98–F118, F141–M161, L168–P188, V197–F217, F226–L246, M263–V283, L318–F338, Y357–F377, V398–M418, V432–L452, and Y507–C527.

The protein belongs to the complex I subunit 5 family.

It localises to the mitochondrion inner membrane. The catalysed reaction is a ubiquinone + NADH + 5 H(+)(in) = a ubiquinol + NAD(+) + 4 H(+)(out). In terms of biological role, core subunit of the mitochondrial membrane respiratory chain NADH dehydrogenase (Complex I) that is believed to belong to the minimal assembly required for catalysis. Complex I functions in the transfer of electrons from NADH to the respiratory chain. The immediate electron acceptor for the enzyme is believed to be ubiquinone. This is NADH-ubiquinone oxidoreductase chain 5 from Caenorhabditis elegans.